A 449-amino-acid chain; its full sequence is Phosphoglucosamine mutase (449 aa).

Residue Ser101 is the Phosphoserine intermediate of the active site. Residues Ser101, Asp243, Asp245, and Asp247 each coordinate Mg(2+). The residue at position 101 (Ser101) is a Phosphoserine.

Belongs to the phosphohexose mutase family. Mg(2+) is required as a cofactor. In terms of processing, activated by phosphorylation.

The enzyme catalyses alpha-D-glucosamine 1-phosphate = D-glucosamine 6-phosphate. In terms of biological role, catalyzes the conversion of glucosamine-6-phosphate to glucosamine-1-phosphate. This is Phosphoglucosamine mutase from Syntrophus aciditrophicus (strain SB).